We begin with the raw amino-acid sequence, 384 residues long: Bifunctional enzyme IspD/IspF (384 aa).

2 2-C-methyl-D-erythritol 4-phosphate cytidylyltransferase regions span residues 1–227 and 1–228; these read MAKV…EGEQ and MAKV…GEQR. The 2-C-methyl-D-erythritol 2,4-cyclodiphosphate synthase stretch occupies residues 228-384; the sequence is RIGSGFDVHR…QATALITLPF (157 aa). Residues D234 and H236 each coordinate a divalent metal cation. 4-CDP-2-C-methyl-D-erythritol 2-phosphate is bound by residues 234–236 and 260–261; these read DVH and HS. Residue H268 participates in a divalent metal cation binding. 4-CDP-2-C-methyl-D-erythritol 2-phosphate is bound by residues 282 to 284, 358 to 361, F365, and R368; these read DIG and TTTE.

In the N-terminal section; belongs to the IspD/TarI cytidylyltransferase family. IspD subfamily. This sequence in the C-terminal section; belongs to the IspF family. A divalent metal cation serves as cofactor.

It catalyses the reaction 2-C-methyl-D-erythritol 4-phosphate + CTP + H(+) = 4-CDP-2-C-methyl-D-erythritol + diphosphate. The catalysed reaction is 4-CDP-2-C-methyl-D-erythritol 2-phosphate = 2-C-methyl-D-erythritol 2,4-cyclic diphosphate + CMP. Its pathway is isoprenoid biosynthesis; isopentenyl diphosphate biosynthesis via DXP pathway; isopentenyl diphosphate from 1-deoxy-D-xylulose 5-phosphate: step 2/6. The protein operates within isoprenoid biosynthesis; isopentenyl diphosphate biosynthesis via DXP pathway; isopentenyl diphosphate from 1-deoxy-D-xylulose 5-phosphate: step 4/6. Functionally, bifunctional enzyme that catalyzes the formation of 4-diphosphocytidyl-2-C-methyl-D-erythritol from CTP and 2-C-methyl-D-erythritol 4-phosphate (MEP) (IspD), and catalyzes the conversion of 4-diphosphocytidyl-2-C-methyl-D-erythritol 2-phosphate (CDP-ME2P) to 2-C-methyl-D-erythritol 2,4-cyclodiphosphate (ME-CPP) with a corresponding release of cytidine 5-monophosphate (CMP) (IspF). This is Bifunctional enzyme IspD/IspF from Rhodospirillum rubrum (strain ATCC 11170 / ATH 1.1.1 / DSM 467 / LMG 4362 / NCIMB 8255 / S1).